The primary structure comprises 471 residues: Heat shock 70 kDa protein 13 (471 aa).

Residues 1 to 22 form the signal peptide; that stretch reads MAREMTILGSAVLTLLLAGYLA. Positions 314-352 are disordered; sequence EEQDRKEPHSSDTELPKDKLSSADDHRVNSGFGRGLSDK. Residues 315 to 341 show a composition bias toward basic and acidic residues; it reads EQDRKEPHSSDTELPKDKLSSADDHRV.

The protein belongs to the heat shock protein 70 family. As to quaternary structure, binds UBQLN2.

Its subcellular location is the microsome. The protein resides in the endoplasmic reticulum. Functionally, has peptide-independent ATPase activity. The chain is Heat shock 70 kDa protein 13 (HSPA13) from Pongo abelii (Sumatran orangutan).